Reading from the N-terminus, the 464-residue chain is Growth hormone-releasing hormone receptor (464 aa).

The N-terminal stretch at 1–22 (MDSLLWATWVLCLLNLWGVALG) is a signal peptide. The Extracellular portion of the chain corresponds to 23–130 (HLHLECDFIT…EEKSYFSTVK (108 aa)). Disulfide bonds link cysteine 41–cysteine 64, cysteine 55–cysteine 96, and cysteine 78–cysteine 112. Residue asparagine 50 is glycosylated (N-linked (GlcNAc...) asparagine). A helical transmembrane segment spans residues 131-151 (IIYTTGHSISIVALCVAIAIL). The Cytoplasmic segment spans residues 152–167 (VALRRLHCPRNYIHTQ). The helical transmembrane segment at 168–188 (LFATFILKASAVFLKDAAVFQ) threads the bilayer. Residues 189-210 (GDSTDHCSMSTILCKVSVAVSH) lie on the Extracellular side of the membrane. A helical transmembrane segment spans residues 211–231 (FATMTNFSWLLAEAVYLSCLL). The Cytoplasmic segment spans residues 232 to 240 (ASTSPRSKP). Residues 241 to 261 (AFWWLVLAGWGLPVLCTGTWV) form a helical membrane-spanning segment. Residues 262–283 (GCKLAFEDTACWDLDDSSPYWW) are Extracellular-facing. The chain crosses the membrane as a helical span at residues 284–304 (IIKGPIVLSVGVNFGLFLNII). Over 305 to 372 (CILLRKLGPA…QLPWRLSKST (68 aa)) the chain is Cytoplasmic. A helical membrane pass occupies residues 373-393 (LLLIPLFGIHYIIFNFLPDSA). The Extracellular segment spans residues 394-398 (GLGIR). A helical transmembrane segment spans residues 399 to 419 (LPLELGLGSFQGFVVAVLYCF). Residues 420 to 464 (LNQEVRTEISRKWYGHDPELLPARRTCTEWTTPPRSRVKVLTSEC) are Cytoplasmic-facing.

It belongs to the G-protein coupled receptor 2 family. As to expression, pituitary gland.

It is found in the cell membrane. Its function is as follows. Receptor for GRF, coupled to G proteins which activate adenylyl cyclase. Stimulates somatotroph cell growth, growth hormone gene transcription and growth hormone secretion. In Rattus norvegicus (Rat), this protein is Growth hormone-releasing hormone receptor (Ghrhr).